Reading from the N-terminus, the 230-residue chain is AA9 family lytic polysaccharide monooxygenase H (230 aa).

Positions 1 to 17 (MKTLSAGLLALASAASA) are cleaved as a signal peptide. Cu(2+)-binding residues include histidine 18 and histidine 89. A disulfide bridge connects residues cysteine 59 and cysteine 178. O2 contacts are provided by histidine 164 and glutamine 173. Tyrosine 175 is a binding site for Cu(2+).

Belongs to the polysaccharide monooxygenase AA9 family. Requires Cu(2+) as cofactor.

It localises to the secreted. The catalysed reaction is [(1-&gt;4)-beta-D-glucosyl]n+m + reduced acceptor + O2 = 4-dehydro-beta-D-glucosyl-[(1-&gt;4)-beta-D-glucosyl]n-1 + [(1-&gt;4)-beta-D-glucosyl]m + acceptor + H2O.. Lytic polysaccharide monooxygenase (LPMO) that depolymerizes crystalline and amorphous polysaccharides via the oxidation of scissile alpha- or beta-(1-4)-glycosidic bonds, yielding primarly C1 oxidation products. Catalysis by LPMOs requires the reduction of the active-site copper from Cu(II) to Cu(I) by a reducing agent and H(2)O(2) or O(2) as a cosubstrate. Active on hemicelluloses, including xylan, glucomannan, and xyloglucan. Preferentially cleaves residual xylan in phosphoric acid-swollen cellulose (PASC). Moreover, when exposed to cellulose-xylan blends, shows a preference for xylan and for releasing oxidized xylooligosaccharides. Has no activity on ivory nut mannan (INM), a linear beta-1,4-linked mannan without substitutions. This chain is AA9 family lytic polysaccharide monooxygenase H, found in Malbranchea cinnamomea (Thermophilic fungus).